We begin with the raw amino-acid sequence, 1001 residues long: Serine/threonine-protein kinase TAO1-B (1001 aa).

Residues 28–281 enclose the Protein kinase domain; the sequence is FSDLREIGHG…SDELLKHMFV (254 aa). Residues 34 to 42 and Lys-57 each bind ATP; that span reads IGHGSFGAV. Asp-151 functions as the Proton acceptor in the catalytic mechanism. Disordered regions lie at residues 324 to 435 and 567 to 586; these read PAVE…YRNR and KEELNENQSTPKKEKQEWLS. The span at 350–370 shows a compositional bias: low complexity; the sequence is SNQSIPSMSISASSQSSSVNS. Basic and acidic residues-rich tracts occupy residues 375–388 and 577–586; these read SDDKSELDMMEGDH and PKKEKQEWLS. Coiled coils occupy residues 458–651 and 754–877; these read SELR…EHAM and KAVL…EIEA. A disordered region spans residues 911 to 1001; that stretch reads SHNPTGGPGP…ISNGSHMSYT (91 aa). Residues 921–930 are compositionally biased toward low complexity; that stretch reads HWGHPMAGPP. 2 stretches are compositionally biased toward polar residues: residues 949–967 and 975–1001; these read GSVQGVSRGSTMGVRNSPQ and GGRTEQGMSRSTSVTSQISNGSHMSYT.

The protein belongs to the protein kinase superfamily. STE Ser/Thr protein kinase family. STE20 subfamily.

It is found in the cytoplasm. It carries out the reaction L-seryl-[protein] + ATP = O-phospho-L-seryl-[protein] + ADP + H(+). It catalyses the reaction L-threonyl-[protein] + ATP = O-phospho-L-threonyl-[protein] + ADP + H(+). Functionally, serine/threonine-protein kinase involved in various processes such as p38/mapk14 stress-activated MAPK cascade, DNA damage response and regulation of cytoskeleton stability. Acts as an activator of the p38/MAPK14 stress-activated MAPK cascade by mediating phosphorylation and subsequent activation of upstream MAP kinase kinases. In response to DNA damage, involved in the G2/M transition DNA damage checkpoint by activating the p38/MAPK14 stress-activated MAPK cascade. This Xenopus laevis (African clawed frog) protein is Serine/threonine-protein kinase TAO1-B (taok1-b).